Reading from the N-terminus, the 283-residue chain is Undecaprenyl-diphosphatase (283 aa).

A run of 7 helical transmembrane segments spans residues 1-21 (MDIIQAIVLGIIQGLTEFLPI), 40-60 (GAAFTAIIQIGTLAAVLIYFY), 85-105 (SRMGWMISAGTIPIVVLGLLF), 117-137 (YIISGSLILLALVLMYAEYLV), 196-216 (FSFLLSLPAVFAAGVYQLLKV), 232-252 (VATVVSGVIGYASIAFLLDYL), and 258-278 (YLFIIYRILLGVFLLAMLSMG).

Belongs to the UppP family.

It localises to the cell inner membrane. The catalysed reaction is di-trans,octa-cis-undecaprenyl diphosphate + H2O = di-trans,octa-cis-undecaprenyl phosphate + phosphate + H(+). Functionally, catalyzes the dephosphorylation of undecaprenyl diphosphate (UPP). Confers resistance to bacitracin. The chain is Undecaprenyl-diphosphatase from Chloroherpeton thalassium (strain ATCC 35110 / GB-78).